The chain runs to 615 residues: Forkhead box protein O (615 aa).

Disordered stretches follow at residues 39–77, 182–205, 217–269, 318–359, and 389–409; these read RARS…DSQQ, KSVR…RAKK, GLND…RLSP, FSAA…APGY, and NSVT…SDSL. The residue at position 44 (Thr44) is a Phosphothreonine; by PKB/AKT1. Polar residues predominate over residues 63–77; that stretch reads TKASNQQLAPGDSQQ. A Phosphoserine modification is found at Ser75. The fork-head DNA-binding region spans 95–201; it reads WGNLSYADLI…ETSRYEKRRG (107 aa). A Phosphoserine; by PKB/AKT1 modification is found at Ser190. 2 stretches are compositionally biased toward polar residues: residues 221 to 230 and 256 to 265; these read ATPSPSSSVS and RASSNASSCG. Residue Ser259 is modified to Phosphoserine; by PKB/AKT1. Ser262, Ser263, and Ser268 each carry phosphoserine. The segment covering 326–335 has biased composition (pro residues); sequence SQPPPPPYQP. Residues 336–351 are compositionally biased toward low complexity; that stretch reads PQHQQAQQQQQQSPYA.

As to quaternary structure, interacts with melt.

Its subcellular location is the cytoplasm. The protein localises to the nucleus. In terms of biological role, transcription factor involved in the regulation of the insulin signaling pathway. Consistently activates both the downstream target Thor\d4EBP and the feedback control target InR. Involved in negative regulation of the cell cycle, modulating cell growth and proliferation. In response to cellular stresses, such as nutrient deprivation or increased levels of reactive oxygen species, foxo is activated and inhibits growth through the action of target genes such as Thor. Foxo activated in the adult fat body can regulate lifespan in adults; an insulin peptide itself may function as one secondary messenger of insulin-regulated aging. Also regulates Lip4, homolog of human acid lipases, thereby acting as a key modulator of lipid metabolism by insulin signaling and integrates insulin responses to glucose and lipid homeostasis. This is Forkhead box protein O from Drosophila erecta (Fruit fly).